Consider the following 328-residue polypeptide: 4-hydroxy-3-methylbut-2-enyl diphosphate reductase (328 aa).

C13 provides a ligand contact to [4Fe-4S] cluster. Positions 41 and 75 each coordinate (2E)-4-hydroxy-3-methylbut-2-enyl diphosphate. H41 and H75 together coordinate dimethylallyl diphosphate. Isopentenyl diphosphate is bound by residues H41 and H75. Position 97 (C97) interacts with [4Fe-4S] cluster. Position 125 (H125) interacts with (2E)-4-hydroxy-3-methylbut-2-enyl diphosphate. H125 contributes to the dimethylallyl diphosphate binding site. H125 lines the isopentenyl diphosphate pocket. E127 serves as the catalytic Proton donor. T168 contributes to the (2E)-4-hydroxy-3-methylbut-2-enyl diphosphate binding site. C229 contacts [4Fe-4S] cluster. S257, S258, N259, and S306 together coordinate (2E)-4-hydroxy-3-methylbut-2-enyl diphosphate. Residues S257, S258, N259, and S306 each contribute to the dimethylallyl diphosphate site. The isopentenyl diphosphate site is built by S257, S258, N259, and S306.

Belongs to the IspH family. [4Fe-4S] cluster is required as a cofactor.

It carries out the reaction isopentenyl diphosphate + 2 oxidized [2Fe-2S]-[ferredoxin] + H2O = (2E)-4-hydroxy-3-methylbut-2-enyl diphosphate + 2 reduced [2Fe-2S]-[ferredoxin] + 2 H(+). The enzyme catalyses dimethylallyl diphosphate + 2 oxidized [2Fe-2S]-[ferredoxin] + H2O = (2E)-4-hydroxy-3-methylbut-2-enyl diphosphate + 2 reduced [2Fe-2S]-[ferredoxin] + 2 H(+). Its pathway is isoprenoid biosynthesis; dimethylallyl diphosphate biosynthesis; dimethylallyl diphosphate from (2E)-4-hydroxy-3-methylbutenyl diphosphate: step 1/1. It participates in isoprenoid biosynthesis; isopentenyl diphosphate biosynthesis via DXP pathway; isopentenyl diphosphate from 1-deoxy-D-xylulose 5-phosphate: step 6/6. In terms of biological role, catalyzes the conversion of 1-hydroxy-2-methyl-2-(E)-butenyl 4-diphosphate (HMBPP) into a mixture of isopentenyl diphosphate (IPP) and dimethylallyl diphosphate (DMAPP). Acts in the terminal step of the DOXP/MEP pathway for isoprenoid precursor biosynthesis. This Chlorobium phaeobacteroides (strain DSM 266 / SMG 266 / 2430) protein is 4-hydroxy-3-methylbut-2-enyl diphosphate reductase.